The sequence spans 259 residues: Taurine import ATP-binding protein TauB (259 aa).

The region spanning 4–233 (LELERISAQY…RYAAGESARA (230 aa)) is the ABC transporter domain. Residue 38–45 (GPSGSGKT) participates in ATP binding.

Belongs to the ABC transporter superfamily. Taurine importer (TC 3.A.1.17.1) family. As to quaternary structure, the complex is composed of two ATP-binding proteins (TauB), two transmembrane proteins (TauC) and a solute-binding protein (TauA).

The protein localises to the cell inner membrane. The catalysed reaction is taurine(out) + ATP + H2O = taurine(in) + ADP + phosphate + H(+). Its function is as follows. Part of the ABC transporter complex TauABC involved in taurine import. Responsible for energy coupling to the transport system. The polypeptide is Taurine import ATP-binding protein TauB (Pseudomonas entomophila (strain L48)).